A 447-amino-acid polypeptide reads, in one-letter code: MKRIVIAGTSSMVGKTTISTGIMKALSKKNNVQPYKIGPDYIDPTYHTEATENKSRNLDSFFMDKLQIRSLFKKHSKNKDISVIEGVRGLYEGISPYNDIGSTASVAKTLNAPVILLMDARSLTRSAAAIIKGFKSFDTELNIKGVIFNKIRGEGHLNKLKEAVKYYDNEIEIIGAIPRDEGLSVSQRHLGLVPTPENKQGLLERIDLWGNTVEECLDIEKIVELSDKSFDFCVDEKNKDETLWKVEKNNSKIAVAFDESFNFYYWDNFDAMEENGAKLKFFSPLNDSEVPDCDTIYLGGGYPEIFSEKLSENKSMIDSIRNFDGKIYGECGGLMYLTNSIDGKEMLKLIDANAVMTPNVQGLSYVKGTFEKDCIIGEKSKEFKAHEFHYSKLININENDFSYRINRGKGIINSMDGITSKGGDIVGGYAHQHCIGNPYFAASLSKI.

One can recognise a GATase cobBQ-type domain in the interval 252–439; it reads KIAVAFDESF…AHQHCIGNPY (188 aa). The Nucleophile role is filled by Cys331.

The protein belongs to the CobB/CbiA family. The cofactor is Mg(2+).

It catalyses the reaction cob(II)yrinate + 2 L-glutamine + 2 ATP + 2 H2O = cob(II)yrinate a,c diamide + 2 L-glutamate + 2 ADP + 2 phosphate + 2 H(+). It carries out the reaction Ni-sirohydrochlorin + 2 L-glutamine + 2 ATP + 2 H2O = Ni-sirohydrochlorin a,c-diamide + 2 L-glutamate + 2 ADP + 2 phosphate + 2 H(+). The protein operates within cofactor biosynthesis; adenosylcobalamin biosynthesis; cob(II)yrinate a,c-diamide from sirohydrochlorin (anaerobic route): step 10/10. Its function is as follows. Catalyzes the ATP-dependent amidation of the two carboxylate groups at positions a and c of cobyrinate, using either L-glutamine or ammonia as the nitrogen source. Involved in the biosynthesis of the unique nickel-containing tetrapyrrole coenzyme F430, the prosthetic group of methyl-coenzyme M reductase (MCR), which plays a key role in methanogenesis and anaerobic methane oxidation. Catalyzes the ATP-dependent amidation of the two carboxylate groups at positions a and c of Ni-sirohydrochlorin, using L-glutamine or ammonia as the nitrogen source. The polypeptide is Cobyrinate a,c-diamide synthase (Methanococcus maripaludis (strain C7 / ATCC BAA-1331)).